The primary structure comprises 258 residues: MSSIDPRAIIDPSAKLAEGVEVGPWSIVGPDVEIGEGTVIGPHVVLKGPTRIGKHNRIYQFSSIGEDTPDMKYKGEPTRLVMGDHNVIREGVTIHRGTIQDRSETTLGDHNLIMAYAHIGHDSVIGNHCILVNNTALAGHVHVGDWAILSGYTLVHQYCHIGAHAFSGMGTAIGKDVPAYVTVFGSPAEARSMNFEGLRRRGFSDEVLHALRRAYKIVYRQGLTVEQAMKELDELVAQFPEVELFRQSIANSARGITR.

It belongs to the transferase hexapeptide repeat family. LpxA subfamily. As to quaternary structure, homotrimer.

Its subcellular location is the cytoplasm. The enzyme catalyses a (3R)-hydroxyacyl-[ACP] + UDP-N-acetyl-alpha-D-glucosamine = a UDP-3-O-[(3R)-3-hydroxyacyl]-N-acetyl-alpha-D-glucosamine + holo-[ACP]. The protein operates within glycolipid biosynthesis; lipid IV(A) biosynthesis; lipid IV(A) from (3R)-3-hydroxytetradecanoyl-[acyl-carrier-protein] and UDP-N-acetyl-alpha-D-glucosamine: step 1/6. Functionally, involved in the biosynthesis of lipid A, a phosphorylated glycolipid that anchors the lipopolysaccharide to the outer membrane of the cell. This Pseudomonas entomophila (strain L48) protein is Acyl-[acyl-carrier-protein]--UDP-N-acetylglucosamine O-acyltransferase.